The following is a 467-amino-acid chain: Glycosyl hydrolase family 109 protein 1 (467 aa).

An N-terminal signal peptide occupies residues 1–22 (MKKLLLNTLIGLALLTCQTSFA). NAD(+) is bound by residues 66-67 (MR), D88, 137-140 (WKHH), 157-158 (EV), and N186. Residues Y215, R231, 243 to 246 (YATH), and Y321 contribute to the substrate site. Y243 contacts NAD(+).

It belongs to the Gfo/Idh/MocA family. Glycosyl hydrolase 109 subfamily. NAD(+) is required as a cofactor.

In terms of biological role, glycosidase. This is Glycosyl hydrolase family 109 protein 1 from Bacteroides thetaiotaomicron (strain ATCC 29148 / DSM 2079 / JCM 5827 / CCUG 10774 / NCTC 10582 / VPI-5482 / E50).